Reading from the N-terminus, the 428-residue chain is 3-phosphoshikimate 1-carboxyvinyltransferase (428 aa).

Positions 22, 23, and 27 each coordinate 3-phosphoshikimate. Lys-22 provides a ligand contact to phosphoenolpyruvate. Phosphoenolpyruvate-binding residues include Gly-94 and Arg-122. The 3-phosphoshikimate site is built by Ser-169, Ser-170, Gln-171, Ser-197, Asp-315, and Lys-342. Gln-171 contributes to the phosphoenolpyruvate binding site. Residue Asp-315 is the Proton acceptor of the active site. Positions 346, 389, and 414 each coordinate phosphoenolpyruvate.

This sequence belongs to the EPSP synthase family. As to quaternary structure, monomer.

Its subcellular location is the cytoplasm. It catalyses the reaction 3-phosphoshikimate + phosphoenolpyruvate = 5-O-(1-carboxyvinyl)-3-phosphoshikimate + phosphate. Its pathway is metabolic intermediate biosynthesis; chorismate biosynthesis; chorismate from D-erythrose 4-phosphate and phosphoenolpyruvate: step 6/7. In terms of biological role, catalyzes the transfer of the enolpyruvyl moiety of phosphoenolpyruvate (PEP) to the 5-hydroxyl of shikimate-3-phosphate (S3P) to produce enolpyruvyl shikimate-3-phosphate and inorganic phosphate. This chain is 3-phosphoshikimate 1-carboxyvinyltransferase, found in Cellvibrio japonicus (strain Ueda107) (Pseudomonas fluorescens subsp. cellulosa).